Consider the following 151-residue polypeptide: Abdominal ganglion neuropeptide L11 (151 aa).

The first 25 residues, 1 to 25 (MPCTPNSHRLLLVTALCLLITSLFA), serve as a signal peptide directing secretion.

Its subcellular location is the secreted. The chain is Abdominal ganglion neuropeptide L11 from Aplysia californica (California sea hare).